The chain runs to 449 residues: Phosphoglucosamine mutase (449 aa).

Residue Ser-100 is the Phosphoserine intermediate of the active site. Residues Ser-100, Asp-241, Asp-243, and Asp-245 each contribute to the Mg(2+) site. Phosphoserine is present on Ser-100.

This sequence belongs to the phosphohexose mutase family. Requires Mg(2+) as cofactor. Activated by phosphorylation.

It carries out the reaction alpha-D-glucosamine 1-phosphate = D-glucosamine 6-phosphate. In terms of biological role, catalyzes the conversion of glucosamine-6-phosphate to glucosamine-1-phosphate. This chain is Phosphoglucosamine mutase, found in Clostridium botulinum (strain 657 / Type Ba4).